Here is a 1978-residue protein sequence, read N- to C-terminus: Dedicator of cytokinesis protein 4 (1978 aa).

Residues 6 to 67 (EHEKYGVVIA…PSSYVHLKNA (62 aa)) enclose the SH3 domain. Y167 carries the post-translational modification Phosphotyrosine. T193 is modified (phosphothreonine). The C2 DOCK-type domain occupies 401-574 (RNDLYITVER…ESFWITSFLC (174 aa)). The region spanning 1199 to 1605 (KTELNKEEMY…FGIQEFPACI (407 aa)) is the DOCKER domain. Phosphoserine occurs at positions 1608, 1616, 1623, 1627, 1629, and 1640. Disordered stretches follow at residues 1657–1738 (SQAS…IYPT) and 1751–1978 (IGDG…VSQL). Residues 1681 to 1712 (PSPSTSSLSSTHSASPNVTSSAPSSARASPLL) are compositionally biased toward low complexity. Phosphoserine is present on S1778. An SH3-binding motif is present at residues 1797–1803 (PPVPPRP). Polar residues predominate over residues 1804 to 1818 (TQTASPARHTTSVSP). Residues 1842-1872 (SPGLSSNSPVLSGSYSSGISSLSRCSTSETS) are compositionally biased toward low complexity. Residues 1873-1882 (GFENQANEQS) show a composition bias toward polar residues. Over residues 1885 to 1895 (VPVPVPVPVPV) the composition is skewed to pro residues. Basic and acidic residues predominate over residues 1953–1966 (SHLENGTRRTEPGP).

Belongs to the DOCK family. Interacts with nucleotide-free Rap1; functions as a guanine nucleotide exchange factor (GEF) for Rap1. Interacts (via DOCKER domain) with RAC1; functions as a guanine nucleotide exchange factor (GEF) for RAC1. Interacts with the SH3 domain of CRK. Interacts with FASLG. Interacts with ELMO2 and EPHA2; mediates activation of RAC1 by EPHA2. Interacts with USH1C (via PDZ 1 domain). Expressed in inner ear (at protein level).

The protein localises to the cell membrane. It localises to the cytoplasm. It is found in the cytosol. Functions as a guanine nucleotide exchange factor (GEF) that promotes the exchange of GDP to GTP, converting inactive GDP-bound small GTPases into their active GTP-bound form. Involved in regulation of adherens junction between cells. Plays a role in cell migration. In terms of biological role, has a higher guanine nucleotide exchange factor activity compared to other isoforms. This is Dedicator of cytokinesis protein 4 (Dock4) from Mus musculus (Mouse).